A 131-amino-acid polypeptide reads, in one-letter code: Peptidyl-prolyl cis-trans isomerase NIMA-interacting 4 (131 aa).

Positions 1–25 are necessary for nuclear localization and DNA-binding; the sequence is MPPKGKSGSGKGGKGKAASGSESSE. The disordered stretch occupies residues 1 to 37; the sequence is MPPKGKSGSGKGGKGKAASGSESSEKKAQGPKGGGNA. Positions 1–41 are necessary for association with the pre-rRNP complexes; that stretch reads MPPKGKSGSGKGGKGKAASGSESSEKKAQGPKGGGNAVKVR. Position 19 is a phosphoserine; by CK2 (serine 19). The 95-residue stretch at 35–129 folds into the PpiC domain; the sequence is GNAVKVRHIL…FGYHIIMVEG (95 aa).

It belongs to the PpiC/parvulin rotamase family. PIN4 subfamily. As to quaternary structure, found in pre-ribosomal ribonucleoprotein (pre-rRNP) complexes. In terms of processing, phosphorylated. Phosphorylation occurs both in the nucleus and the cytoplasm. Phosphorylation at Ser-19 does not affect its PPIase activity but is required for nuclear localization, and the dephosphorylation is a prerequisite for the binding to DNA. The unphosphorylated form associates with the pre-rRNP complexes in the nucleus.

The protein resides in the nucleus. The protein localises to the nucleolus. It localises to the cytoplasm. It is found in the cytoskeleton. Its subcellular location is the spindle. It carries out the reaction [protein]-peptidylproline (omega=180) = [protein]-peptidylproline (omega=0). Its function is as follows. Involved as a ribosomal RNA processing factor in ribosome biogenesis. Binds to tightly bent AT-rich stretches of double-stranded DNA. This Bos taurus (Bovine) protein is Peptidyl-prolyl cis-trans isomerase NIMA-interacting 4 (PIN4).